The sequence spans 149 residues: Deoxyuridine 5'-triphosphate nucleotidohydrolase (149 aa).

Residues 68 to 70 (RSG), asparagine 81, 85 to 87 (LID), and methionine 95 contribute to the substrate site.

Belongs to the dUTPase family. The cofactor is Mg(2+).

It carries out the reaction dUTP + H2O = dUMP + diphosphate + H(+). The protein operates within pyrimidine metabolism; dUMP biosynthesis; dUMP from dCTP (dUTP route): step 2/2. In terms of biological role, this enzyme is involved in nucleotide metabolism: it produces dUMP, the immediate precursor of thymidine nucleotides and it decreases the intracellular concentration of dUTP so that uracil cannot be incorporated into DNA. This chain is Deoxyuridine 5'-triphosphate nucleotidohydrolase, found in Albidiferax ferrireducens (strain ATCC BAA-621 / DSM 15236 / T118) (Rhodoferax ferrireducens).